The primary structure comprises 518 residues: Protein nucleotidyltransferase YdiU (518 aa).

ATP contacts are provided by glycine 100, glycine 102, arginine 103, lysine 123, aspartate 135, glycine 136, arginine 193, and arginine 200. The active-site Proton acceptor is the aspartate 270. Asparagine 271 and aspartate 280 together coordinate Mg(2+). Residue aspartate 280 participates in ATP binding.

Belongs to the SELO family. Mg(2+) is required as a cofactor. Mn(2+) serves as cofactor.

It catalyses the reaction L-seryl-[protein] + ATP = 3-O-(5'-adenylyl)-L-seryl-[protein] + diphosphate. It carries out the reaction L-threonyl-[protein] + ATP = 3-O-(5'-adenylyl)-L-threonyl-[protein] + diphosphate. The enzyme catalyses L-tyrosyl-[protein] + ATP = O-(5'-adenylyl)-L-tyrosyl-[protein] + diphosphate. The catalysed reaction is L-histidyl-[protein] + UTP = N(tele)-(5'-uridylyl)-L-histidyl-[protein] + diphosphate. It catalyses the reaction L-seryl-[protein] + UTP = O-(5'-uridylyl)-L-seryl-[protein] + diphosphate. It carries out the reaction L-tyrosyl-[protein] + UTP = O-(5'-uridylyl)-L-tyrosyl-[protein] + diphosphate. In terms of biological role, nucleotidyltransferase involved in the post-translational modification of proteins. It can catalyze the addition of adenosine monophosphate (AMP) or uridine monophosphate (UMP) to a protein, resulting in modifications known as AMPylation and UMPylation. This chain is Protein nucleotidyltransferase YdiU, found in Xanthomonas oryzae pv. oryzae (strain PXO99A).